A 158-amino-acid chain; its full sequence is NAD(P)H-quinone oxidoreductase subunit J, chloroplastic (158 aa).

This sequence belongs to the complex I 30 kDa subunit family. In terms of assembly, NDH is composed of at least 16 different subunits, 5 of which are encoded in the nucleus.

The protein localises to the plastid. Its subcellular location is the chloroplast thylakoid membrane. It carries out the reaction a plastoquinone + NADH + (n+1) H(+)(in) = a plastoquinol + NAD(+) + n H(+)(out). The enzyme catalyses a plastoquinone + NADPH + (n+1) H(+)(in) = a plastoquinol + NADP(+) + n H(+)(out). NDH shuttles electrons from NAD(P)H:plastoquinone, via FMN and iron-sulfur (Fe-S) centers, to quinones in the photosynthetic chain and possibly in a chloroplast respiratory chain. The immediate electron acceptor for the enzyme in this species is believed to be plastoquinone. Couples the redox reaction to proton translocation, and thus conserves the redox energy in a proton gradient. The chain is NAD(P)H-quinone oxidoreductase subunit J, chloroplastic from Guizotia abyssinica (Niger).